The sequence spans 237 residues: Keratin-associated protein 5-5 (237 aa).

8 consecutive repeat copies span residues 62 to 65 (CCVP), 68 to 71 (CCKP), 74 to 77 (CCVP), 159 to 162 (CCKP), 178 to 181 (CCKP), 188 to 191 (CCKP), 198 to 201 (CCKP), and 227 to 230 (CCVP). Positions 62–230 (CCVPVCCCKP…CCCQSSCCVP (169 aa)) are 8 X 4 AA repeats of C-C-X-P.

This sequence belongs to the KRTAP type 5 family. Interacts with hair keratins. Restricted to hair root, not detected in any other tissues.

Functionally, in the hair cortex, hair keratin intermediate filaments are embedded in an interfilamentous matrix, consisting of hair keratin-associated protein (KRTAP), which are essential for the formation of a rigid and resistant hair shaft through their extensive disulfide bond cross-linking with abundant cysteine residues of hair keratins. The matrix proteins include the high-sulfur and high-glycine-tyrosine keratins. This is Keratin-associated protein 5-5 (KRTAP5-5) from Homo sapiens (Human).